The following is a 325-amino-acid chain: MSWISPELIEILLTILKAVVILLVVVTCGAFMSFGERRLLGLFQNRYGPNRVGWGGSLQLVADMIKMFFKEDWIPKFSDRVIFTLAPMIAFTSLLLAFAIVPVSPGWVVADLNIGILFFLMMAGLAVYAVLFAGWSSNNKYSLLGAMRASAQTLSYEVFLGLSLMGVVAQAGSFNMTDIVNSQAHVWNVIPQFFGFITFAIAGVAVCHRHPFDQPEAEQELADGYHIEYSGMKFGLFFVGEYIGIVTISALMVTLFFGGWQGPLLPPFIWFALKTAFFMMMFILIRASLPRPRYDRVMSFGWKICLPLTLINLLVTAAVILWQAQ.

Transmembrane regions (helical) follow at residues 11-31 (ILLT…CGAF), 81-101 (VIFT…FAIV), 114-134 (IGIL…LFAG), 154-174 (LSYE…AGSF), 186-206 (VWNV…GVAV), 237-257 (FFVG…TLFF), 265-285 (LPPF…FILI), and 304-324 (ICLP…LWQA).

The protein belongs to the complex I subunit 1 family. In terms of assembly, NDH-1 is composed of 13 different subunits. Subunits NuoA, H, J, K, L, M, N constitute the membrane sector of the complex.

The protein resides in the cell inner membrane. The enzyme catalyses a quinone + NADH + 5 H(+)(in) = a quinol + NAD(+) + 4 H(+)(out). In terms of biological role, NDH-1 shuttles electrons from NADH, via FMN and iron-sulfur (Fe-S) centers, to quinones in the respiratory chain. The immediate electron acceptor for the enzyme in this species is believed to be ubiquinone. Couples the redox reaction to proton translocation (for every two electrons transferred, four hydrogen ions are translocated across the cytoplasmic membrane), and thus conserves the redox energy in a proton gradient. This subunit may bind ubiquinone. This chain is NADH-quinone oxidoreductase subunit H, found in Shigella flexneri serotype 5b (strain 8401).